A 522-amino-acid chain; its full sequence is MSEFLPQRDWTVIVGSGMAGLMAAMTLAPQPVLLVTRGALGGETSSAWAQGGIAASLGPDDRAALHVADTLAAGDGLCDEDMVVGIVSSAPAVIDALERAGVRFDRDAGGNYVFGLEAAHSRRRILHAEGDGSGAAIVRALTDAVRRTPSITVLEGTEVRRLLTEDSVIAGLACAGPNGSFLLPASQVILATGGLGGLYDATTNPSGNFGQGIMLAARAGAILADMEFVQFHPTALSSPRRPLALVSEAVRGEGALLLNENGERFMAAVPGAELASRDIVARAIDREILRGGQVFLDARQALGSGFASRFPSIDLLCREAGIDPARELVPVRPAVHYHMGGVATDNKGRSSVRGLWVAGETACTGLHGANRLASNSLLEAAAMGMRAAQDIAGRPAPAARSAAAVSPNATADFSPADLAAVRPIVSRHLGIVRHAAGLAEAIRDLLPLAERNGPASDPAVVALSIAVFAALRRESRGAHFRDDFSQKDAKAMRRRLSLNDVVTVAHEFSSSSLATAGFARSA.

FAD-binding positions include 16 to 19 (SGMA) and 45 to 52 (SSAWAQGG). The active-site Proton donor/acceptor is Arg-277. FAD contacts are provided by residues Glu-360 and 376-377 (SL).

It belongs to the FAD-dependent oxidoreductase 2 family. NadB subfamily. The cofactor is FAD.

It is found in the cytoplasm. It carries out the reaction L-aspartate + O2 = iminosuccinate + H2O2. Its pathway is cofactor biosynthesis; NAD(+) biosynthesis; iminoaspartate from L-aspartate (oxidase route): step 1/1. In terms of biological role, catalyzes the oxidation of L-aspartate to iminoaspartate, the first step in the de novo biosynthesis of NAD(+). The polypeptide is L-aspartate oxidase (nadB) (Agrobacterium fabrum (strain C58 / ATCC 33970) (Agrobacterium tumefaciens (strain C58))).